The following is a 553-amino-acid chain: Solute carrier family 22 member 12 (553 aa).

A helical membrane pass occupies residues 10 to 30 (VGGLGRFQLFQTVALVTPILW). A glycan (N-linked (GlcNAc...) asparagine) is linked at asparagine 56. The next 11 membrane-spanning stretches (helical) occupy residues 146-166 (PMAQ…CGHA), 182-202 (LVSV…YCLF), 204-224 (FLLA…LMEW), 232-252 (LVMT…GSVA), 260-280 (MLQL…WWLP), 351-371 (IISM…ALDL), 378-398 (IFLL…GSLL), 412-432 (FLVL…GMGV), 435-455 (SALA…ITIF), 466-486 (MTAV…GPLV), and 495-515 (WMPL…ALLL). Position 534 is a phosphoserine (serine 534). Threonine 542 is subject to Phosphothreonine.

This sequence belongs to the major facilitator (TC 2.A.1) superfamily. Organic cation transporter (TC 2.A.1.19) family. As to quaternary structure, interacts with PDZK1. Post-translationally, N-glycosylated. In terms of tissue distribution, detected in kidney (at protein level). Detected in kidney cortex, in proximal tubules.

The protein resides in the apical cell membrane. It catalyses the reaction urate(out) + (S)-lactate(in) = urate(in) + (S)-lactate(out). The enzyme catalyses nicotinate(in) + urate(out) = nicotinate(out) + urate(in). It carries out the reaction urate(out) + n chloride(in) = urate(in) + n chloride(out). The catalysed reaction is orotate(out) + nicotinate(in) = orotate(in) + nicotinate(out). Its function is as follows. Electroneutral antiporter that translocates urate across the apical membrane of proximal tubular cells in exchange for monovalent organic or inorganic anions. Involved in renal reabsorption of urate and helps maintaining blood levels of uric acid. Mediates urate uptake by an exchange with organic anions such as (S)-lactate and nicotinate, and inorganic anion Cl(-). Other inorganic anions such as Br(-), I(-) and NO3(-) may also act as counteranions that exchange for urate. Also mediates orotate tubular uptake coupled with nicotinate efflux and to a lesser extent with lactate efflux, therefore displaying a potential role in orotate renal reabsorption. Orotate transport is Cl(-)-dependent. This Mus musculus (Mouse) protein is Solute carrier family 22 member 12.